The primary structure comprises 325 residues: Intelectin-2 (325 aa).

The signal sequence occupies residues 1-26 (MLSMLRTMTRLCFLLFFSVATSGCSA). Residues 44 to 267 (FSFSSLPRSC…AANALCAGIK (224 aa)) form the Fibrinogen C-terminal domain. Cysteine 53 and cysteine 82 are joined by a disulfide. Residues histidine 98, glutamate 99, aspartate 101, glycine 104, glycine 109, aspartate 110, and aspartate 145 each contribute to the Ca(2+) site. 3 disulfides stabilise this stretch: cysteine 106/cysteine 292, cysteine 211/cysteine 271, and cysteine 263/cysteine 277. Ca(2+) is bound by residues asparagine 272, glutamate 274, and aspartate 294. Residue 274 to 275 (EH) participates in a carbohydrate binding.

Expressed only in the small intestine.

Its subcellular location is the secreted. May play a role in the defense system against pathogens. The sequence is that of Intelectin-2 (ITLN2) from Homo sapiens (Human).